A 311-amino-acid chain; its full sequence is Methionyl-tRNA formyltransferase (311 aa).

Residue 109 to 112 coordinates (6S)-5,6,7,8-tetrahydrofolate; that stretch reads SLLP.

Belongs to the Fmt family.

It carries out the reaction L-methionyl-tRNA(fMet) + (6R)-10-formyltetrahydrofolate = N-formyl-L-methionyl-tRNA(fMet) + (6S)-5,6,7,8-tetrahydrofolate + H(+). Functionally, attaches a formyl group to the free amino group of methionyl-tRNA(fMet). The formyl group appears to play a dual role in the initiator identity of N-formylmethionyl-tRNA by promoting its recognition by IF2 and preventing the misappropriation of this tRNA by the elongation apparatus. This is Methionyl-tRNA formyltransferase from Staphylococcus aureus (strain JH1).